Reading from the N-terminus, the 328-residue chain is POU domain, class 5, transcription factor 2 (328 aa).

A disordered region spans residues 1–25 (MAGHRPSNHFCPLPGSGGGGPRGPM). Residues 118–192 (DISGILKELQ…LLKKWLKEVE (75 aa)) enclose the POU-specific domain. Positions 210–269 (GKWRRASRERRIGNSLEKFFQRCPKPTPQQISHIAGCLQLQKDVVRVWFYNRSKMGSRPT) form a DNA-binding region, homeobox.

It belongs to the POU transcription factor family. Class-5 subfamily. Expressed in skeletal and cardiac muscles, brain, heart and lung. Little or no detectable expression found in pancreas, kidney, liver or placenta.

The protein localises to the nucleus. Transcription factor that binds preferentially to the octamer motif (5'-ATGTTAAT-3'). May exert a regulatory function in meiotic events that are required for terminal differentiation of male germ cell. The chain is POU domain, class 5, transcription factor 2 (POU5F2) from Homo sapiens (Human).